A 153-amino-acid chain; its full sequence is Xanthine-guanine phosphoribosyltransferase (153 aa).

Residues 37–38 (RG), Arg-69, and 88–96 (DDLVDTGGT) contribute to the 5-phospho-alpha-D-ribose 1-diphosphate site. Arg-69 lines the GMP pocket. Residue Asp-89 participates in Mg(2+) binding. Positions 92 and 135 each coordinate guanine. Residues Asp-92 and Ile-135 each contribute to the xanthine site. GMP is bound by residues 92–96 (DTGGT) and 134–135 (WI).

This sequence belongs to the purine/pyrimidine phosphoribosyltransferase family. XGPT subfamily. As to quaternary structure, homotetramer. The cofactor is Mg(2+).

It localises to the cell inner membrane. It carries out the reaction GMP + diphosphate = guanine + 5-phospho-alpha-D-ribose 1-diphosphate. The catalysed reaction is XMP + diphosphate = xanthine + 5-phospho-alpha-D-ribose 1-diphosphate. The enzyme catalyses IMP + diphosphate = hypoxanthine + 5-phospho-alpha-D-ribose 1-diphosphate. Its pathway is purine metabolism; GMP biosynthesis via salvage pathway; GMP from guanine: step 1/1. The protein operates within purine metabolism; XMP biosynthesis via salvage pathway; XMP from xanthine: step 1/1. In terms of biological role, purine salvage pathway enzyme that catalyzes the transfer of the ribosyl-5-phosphate group from 5-phospho-alpha-D-ribose 1-diphosphate (PRPP) to the N9 position of the 6-oxopurines guanine and xanthine to form the corresponding ribonucleotides GMP (guanosine 5'-monophosphate) and XMP (xanthosine 5'-monophosphate), with the release of PPi. To a lesser extent, also acts on hypoxanthine. The chain is Xanthine-guanine phosphoribosyltransferase from Proteus mirabilis (strain HI4320).